Reading from the N-terminus, the 187-residue chain is Crossover junction endodeoxyribonuclease RuvC (187 aa).

Catalysis depends on residues aspartate 7, glutamate 67, and aspartate 140. Positions 7, 67, and 140 each coordinate Mg(2+).

Belongs to the RuvC family. As to quaternary structure, homodimer which binds Holliday junction (HJ) DNA. The HJ becomes 2-fold symmetrical on binding to RuvC with unstacked arms; it has a different conformation from HJ DNA in complex with RuvA. In the full resolvosome a probable DNA-RuvA(4)-RuvB(12)-RuvC(2) complex forms which resolves the HJ. Requires Mg(2+) as cofactor.

The protein resides in the cytoplasm. It catalyses the reaction Endonucleolytic cleavage at a junction such as a reciprocal single-stranded crossover between two homologous DNA duplexes (Holliday junction).. Its function is as follows. The RuvA-RuvB-RuvC complex processes Holliday junction (HJ) DNA during genetic recombination and DNA repair. Endonuclease that resolves HJ intermediates. Cleaves cruciform DNA by making single-stranded nicks across the HJ at symmetrical positions within the homologous arms, yielding a 5'-phosphate and a 3'-hydroxyl group; requires a central core of homology in the junction. The consensus cleavage sequence is 5'-(A/T)TT(C/G)-3'. Cleavage occurs on the 3'-side of the TT dinucleotide at the point of strand exchange. HJ branch migration catalyzed by RuvA-RuvB allows RuvC to scan DNA until it finds its consensus sequence, where it cleaves and resolves the cruciform DNA. This Prosthecochloris aestuarii (strain DSM 271 / SK 413) protein is Crossover junction endodeoxyribonuclease RuvC.